A 529-amino-acid chain; its full sequence is 1,4-beta-D-glucan cellobiohydrolase xynA (529 aa).

Positions 1-25 (MSALNSFNMYKSALILGSLLATAGA) are cleaved as a signal peptide. Positions 26-456 (QQIGTYTAET…SDIKVGPFNS (431 aa)) are catalytic. N-linked (GlcNAc...) asparagine glycans are attached at residues Asn70 and Asn219. Residue Glu234 is the Nucleophile of the active site. The Proton donor role is filled by Glu239. N-linked (GlcNAc...) asparagine glycosylation is present at Asn413. The disordered stretch occupies residues 413–438 (NETGTPGAARGSCPTTSGNPKTVESQ). A compositionally biased stretch (polar residues) spans 425–438 (CPTTSGNPKTVESQ). Asn455 carries N-linked (GlcNAc...) asparagine glycosylation. The tract at residues 457–493 (TFSGGTSTGGSTTTTASGTTSTKASTTSTSSTSTGTG) is thr-rich linker. A disordered region spans residues 460–491 (GGTSTGGSTTTTASGTTSTKASTTSTSSTSTG). The CBM1 domain occupies 493-529 (GVAAHWGQCGGQGWTGPTTCASGTTCTVVNPYYSQCL). Disulfide bonds link Cys501/Cys518 and Cys512/Cys528.

The protein belongs to the glycosyl hydrolase 7 (cellulase C) family.

It is found in the secreted. The enzyme catalyses Hydrolysis of (1-&gt;4)-beta-D-glucosidic linkages in cellulose and cellotetraose, releasing cellobiose from the non-reducing ends of the chains.. Cellobiose inhibits xynA at high concentrations. The biological conversion of cellulose to glucose generally requires three types of hydrolytic enzymes: (1) Endoglucanases which cut internal beta-1,4-glucosidic bonds; (2) Exocellobiohydrolases that cut the disaccharide cellobiose from the non-reducing end of the cellulose polymer chain; (3) Beta-1,4-glucosidases which hydrolyze the cellobiose and other short cello-oligosaccharides to glucose. This Talaromyces funiculosus (Fruitlet core rot fungus) protein is 1,4-beta-D-glucan cellobiohydrolase xynA (xynA).